Consider the following 715-residue polypeptide: Serrate RNA effector molecule homolog (715 aa).

Disordered regions lie at residues methionine 1–proline 87, glutamate 223–alanine 259, and glutamate 629–proline 715. Basic and acidic residues-rich tracts occupy residues glycine 7–arginine 25, tyrosine 37–aspartate 57, and glutamate 223–glutamate 242. Positions proline 243–threonine 256 are enriched in acidic residues. The segment covering glutamate 629 to glycine 659 has biased composition (basic and acidic residues).

This sequence belongs to the ARS2 family.

The protein resides in the nucleus. In terms of biological role, acts as a mediator between the cap-binding complex (CBC) and the primary microRNAs (miRNAs) processing machinery. Contributes to the stability and delivery of capped primary miRNA transcripts to the primary miRNA processing complex, thereby playing a role in RNA-mediated gene silencing (RNAi) by miRNAs. This is Serrate RNA effector molecule homolog from Caenorhabditis briggsae.